The sequence spans 341 residues: MSKANVGINGFGRIGRLVLRAAVEKDTVQVVAVNDPFITIDYMVYLFKYDSTHGQFKGTVTYDGDFLIVQKDGKSSHKIKVFNSKDPAAIAWGSVKADFVVESTGVFTTKEKASAHLQGGAKKVIISAPSADAPMYVVGVNHEKYDASNDHVVSNASCTTNCLAPLAKVINDNFGIIEGLMTTVHAVTATQKTVDGPSGKLWRDGRGAGQNIIPASTGAAKAVGKVIPELNGKLTGMAFRVPTPDVSVVDLTVRLEKPASMDDIKKVVKAAADGPMKGILAYTEDQVVSTDFVSDPHSSIFDAGACISLNPNFVKLVSWYDNEYGYSNRVVDLIGYIATRG.

NAD(+) contacts are provided by residues 13 to 14 (RI), aspartate 35, and lysine 85. D-glyceraldehyde 3-phosphate is bound by residues 157–159 (SCT), threonine 188, 217–218 (TG), and arginine 240. Cysteine 158 serves as the catalytic Nucleophile. Asparagine 322 contributes to the NAD(+) binding site.

This sequence belongs to the glyceraldehyde-3-phosphate dehydrogenase family. Homotetramer.

It localises to the cytoplasm. The enzyme catalyses D-glyceraldehyde 3-phosphate + phosphate + NAD(+) = (2R)-3-phospho-glyceroyl phosphate + NADH + H(+). Its pathway is carbohydrate degradation; glycolysis; pyruvate from D-glyceraldehyde 3-phosphate: step 1/5. This Caenorhabditis elegans protein is Glyceraldehyde-3-phosphate dehydrogenase 1 (gpd-1).